The sequence spans 974 residues: Exocyst complex component 4 (974 aa).

Position 2 is an N-acetylalanine (alanine 2). Residue lysine 9 is modified to N6-acetyllysine. Serine 32 and serine 226 each carry phosphoserine. Residues 32 to 114 (STSDDVEDRE…HCKRDELRKL (83 aa)) are a coiled coil. Phosphothreonine is present on residues threonine 233 and threonine 237. Residue serine 468 is modified to Phosphoserine.

It belongs to the SEC8 family. The exocyst complex is composed of EXOC1, EXOC2, EXOC3, EXOC4, EXOC5, EXOC6, EXOC7 and EXOC8. Interacts with BIRC6/bruce. Interacts with MYRIP. Interacts with SH3BP1; required for the localization of both SH3BP1 and the exocyst to the leading edge of migrating cells. Interacts with SLC6A9.

The protein localises to the midbody. Its subcellular location is the midbody ring. The protein resides in the cell projection. It localises to the cytoplasm. It is found in the cytoskeleton. The protein localises to the microtubule organizing center. Its subcellular location is the centrosome. Functionally, component of the exocyst complex involved in the docking of exocytic vesicles with fusion sites on the plasma membrane. The protein is Exocyst complex component 4 (EXOC4) of Homo sapiens (Human).